The chain runs to 383 residues: Adaptive-response sensory kinase SasA (383 aa).

Positions 161–383 (MLAHDLRSPL…SFHFTLPVYR (223 aa)) constitute a Histidine kinase domain. His-164 carries the post-translational modification Phosphohistidine; by autocatalysis.

Homooligomerizes. Interacts with KaiC1. Interacts with KaiC1 and RpaA. Binds to the B-loop in the CI domain of KaiC; SasA and KaiB compete to bind to the CI domain.

It carries out the reaction ATP + protein L-histidine = ADP + protein N-phospho-L-histidine.. In terms of biological role, member of the two-component regulatory system SasA/RpaA involved in genome-wide circadian gene expression. One of several clock output pathways. Participates in the Kai clock protein complex, the main circadian regulator in cyanobacteria, via its interaction with KaiC. KaiC enhances the autophosphorylation activity of SasA, which then transfers its phosphate group to RpaA to activate it. In addition to its output function, recruits fold-shifted KaiB (KaiB(fs)) to KaiC to cooperatively form the KaiB(6):KaiC(6) complex (independent of SasA kinase activity). Required for robustness of the circadian rhythm of gene expression and is involved in clock output, also required for adaptation to light/dark cycles. Its function is as follows. Plays an important role in glucose metabolism, important for expression of genes involved in glycolysis, gluconeogenesis, the oxidative pentose phosphate pathway, and glycogen metabolism. Required for heterotrophic growth. Overexpression from the psbAII promoter leads to altered levels of genes involved in carbon metabolism, increased levels of transcripts for clock oscillator genes in the light and the dark, complete loss of glycogen accumulation, decreased levels of metabolites of sugar catabolism and increased levels of amino acids in the light and increased levels of SigE protein. This Synechocystis sp. (strain ATCC 27184 / PCC 6803 / Kazusa) protein is Adaptive-response sensory kinase SasA.